The primary structure comprises 147 residues: Echinoidin (147 aa).

Residues 1–143 (GCCPTFWTSF…STRHYLICKL (143 aa)) form the C-type lectin domain. 3 disulfides stabilise this stretch: cysteine 3–cysteine 14, cysteine 31–cysteine 141, and cysteine 116–cysteine 132. The O-linked (Hex) serine glycan is linked to serine 38. Positions 39–41 (RGD) match the Cell attachment site motif.

Homodimer; disulfide-linked. The identity of the saccharide is not reported in PubMed:3571253, and it is unlikely to be N-acetylgalactosamine. The sugar attached to Ser-38 is represented simply as Hex. In terms of tissue distribution, coelemic fluid.

The protein resides in the secreted. Role in the defense system of the organism against microorganisms. This lectin is specific for Gal-GalNAc. The polypeptide is Echinoidin (Heliocidaris crassispina (Sea urchin)).